The following is a 293-amino-acid chain: N-acetylmannosamine kinase (293 aa).

Residues 5 to 12 (AIDIGGTK) and 133 to 140 (GVGGGLVI) each bind ATP. Residues H157, C167, C169, and C174 each contribute to the Zn(2+) site.

This sequence belongs to the ROK (NagC/XylR) family. NanK subfamily. In terms of assembly, homodimer.

The enzyme catalyses an N-acyl-D-mannosamine + ATP = an N-acyl-D-mannosamine 6-phosphate + ADP + H(+). It functions in the pathway amino-sugar metabolism; N-acetylneuraminate degradation; D-fructose 6-phosphate from N-acetylneuraminate: step 2/5. Functionally, catalyzes the phosphorylation of N-acetylmannosamine (ManNAc) to ManNAc-6-P. This chain is N-acetylmannosamine kinase, found in Vibrio vulnificus (strain YJ016).